The primary structure comprises 882 residues: Cadherin-1 (882 aa).

A signal peptide spans 1 to 23 (MGPWSRSLSALCCCCRCNPWLCR). The propeptide occupies 24–154 (EPEPCIPGFG…PHHGLRRQKR (131 aa)). The tract at residues 117–137 (EVSAHHHHHHSHHDSPSGTQT) is disordered. 5 consecutive Cadherin domains span residues 154 to 262 (RDWV…KPQF), 263 to 375 (TQEV…APRF), 376 to 486 (NPTT…APIF), 487 to 595 (VPPQ…GPVP), and 594 to 702 (VPEP…RPAE). The Extracellular portion of the chain corresponds to 155–709 (DWVIPPISCP…PAEAGLQVPA (555 aa)). Ser-280 carries O-linked (Man...) serine glycosylation. Thr-285, Thr-358, Thr-470, Thr-472, and Thr-509 each carry an O-linked (Man...) threonine glycan. N-linked (GlcNAc...) asparagine glycosylation occurs at Asn-558. 3 O-linked (Man...) threonine glycosylation sites follow: Thr-576, Thr-578, and Thr-580. N-linked (GlcNAc...) asparagine glycosylation is present at Asn-637. The chain crosses the membrane as a helical span at residues 710-730 (ILGILGGILAFLILILLLLLL). Residues 731–882 (VRRRRVVKEP…ADMYGGGEDD (152 aa)) are Cytoplasmic-facing. A disordered region spans residues 747-767 (DTRDNVYYYDEEGGGEEDQDF). 3 positions are modified to phosphotyrosine; by SRC: Tyr-753, Tyr-754, and Tyr-755. Residues 755 to 767 (YDEEGGGEEDQDF) show a composition bias toward acidic residues. A required for binding CTNND1 and PSEN1 region spans residues 758–769 (EGGGEEDQDFDL). Phosphoserine occurs at positions 770, 793, 838, 840, and 846. The tract at residues 811 to 882 (IDENLKAADS…ADMYGGGEDD (72 aa)) is required for binding alpha, beta and gamma catenins.

Homodimer; disulfide-linked. Component of an E-cadherin/ catenin adhesion complex composed of at least E-cadherin/CDH1, beta-catenin/CTNNB1 or gamma-catenin/JUP, and potentially alpha-catenin/CTNNA1; the complex is located to adherens junctions. Found in a complex composed of CDH1, RAP1A and PKP3; PKP3 acts as a scaffold protein within the complex, the complex is required for CDH1 localization to mature desmosome cell junctions. Interacts with the TRPV4 and CTNNB1 complex. Interacts with CTNND1. The stable association of CTNNA1 is controversial as CTNNA1 was shown not to bind to F-actin when assembled in the complex. Alternatively, the CTNNA1-containing complex may be linked to F-actin by other proteins such as LIMA1. Interaction with PSEN1, cleaves CDH1 resulting in the disassociation of cadherin-based adherens junctions (CAJs). Interacts with AJAP1 and DLGAP5. Interacts with TBC1D2. Interacts with CAV1. Interacts with PIP5K1C. Interacts with RAB8B. Interacts with DDR1; this stabilizes CDH1 at the cell surface and inhibits its internalization. Interacts with RAPGEF2. Interacts with KLRG1. Forms a ternary complex composed of ADAM10, CADH1 and EPHA4; within the complex, CADH1 is cleaved by ADAM10 which disrupts adherens junctions. Interacts with SPEF1. Interacts with CTNNB1 and PKP2. Interacts with AMOTL2; the interaction may facilitate binding of radial actin fibers to cell junction complexes. Interacts with DSG3; the interaction is required for CDH1 localization to developing adherens junctions. Post-translationally, during apoptosis or with calcium influx, cleaved by a membrane-bound metalloproteinase (ADAM10), PS1/gamma-secretase and caspase-3. Processing by the metalloproteinase, induced by calcium influx, causes disruption of cell-cell adhesion and the subsequent release of beta-catenin into the cytoplasm. The residual membrane-tethered cleavage product is rapidly degraded via an intracellular proteolytic pathway. Cleavage by caspase-3 releases the cytoplasmic tail resulting in disintegration of the actin microfilament system. The gamma-secretase-mediated cleavage promotes disassembly of adherens junctions. During development of the cochlear organ of Corti, cleavage by ADAM10 at adherens junctions promotes pillar cell separation. In terms of processing, N-glycosylation at Asn-637 is essential for expression, folding and trafficking. Addition of bisecting N-acetylglucosamine by MGAT3 modulates its cell membrane location. Ubiquitinated by a SCF complex containing SKP2, which requires prior phosphorylation by CK1/CSNK1A1. Ubiquitinated by CBLL1/HAKAI, requires prior phosphorylation at Tyr-754. Post-translationally, O-glycosylated. O-manosylated by TMTC1, TMTC2, TMTC3 or TMTC4. Thr-285 and Thr-509 are O-mannosylated by TMTC2 or TMTC4 but not TMTC1 or TMTC3.

It localises to the cell junction. Its subcellular location is the adherens junction. It is found in the cell membrane. The protein resides in the endosome. The protein localises to the golgi apparatus. It localises to the trans-Golgi network. Its subcellular location is the cytoplasm. It is found in the desmosome. Its function is as follows. Cadherins are calcium-dependent cell adhesion proteins. They preferentially interact with themselves in a homophilic manner in connecting cells; cadherins may thus contribute to the sorting of heterogeneous cell types. CDH1 is involved in mechanisms regulating cell-cell adhesions, mobility and proliferation of epithelial cells. Promotes organization of radial actin fiber structure and cellular response to contractile forces, via its interaction with AMOTL2 which facilitates anchoring of radial actin fibers to CDH1 junction complexes at the cell membrane. Plays a role in the early stages of desmosome cell-cell junction formation via facilitating the recruitment of DSG2 and DSP to desmosome plaques. Has a potent invasive suppressor role. It is a ligand for integrin alpha-E/beta-7. E-Cad/CTF2 promotes non-amyloidogenic degradation of Abeta precursors. Has a strong inhibitory effect on APP C99 and C83 production. In Bos taurus (Bovine), this protein is Cadherin-1 (CDH1).